The sequence spans 510 residues: Kynurenine 3-monooxygenase (510 aa).

It belongs to the aromatic-ring hydroxylase family. KMO subfamily. It depends on FAD as a cofactor.

Its subcellular location is the mitochondrion outer membrane. The enzyme catalyses L-kynurenine + NADPH + O2 + H(+) = 3-hydroxy-L-kynurenine + NADP(+) + H2O. It functions in the pathway cofactor biosynthesis; NAD(+) biosynthesis; quinolinate from L-kynurenine: step 1/3. Functionally, catalyzes the hydroxylation of L-kynurenine (L-Kyn) to form 3-hydroxy-L-kynurenine (L-3OHKyn). Required for synthesis of quinolinic acid. The chain is Kynurenine 3-monooxygenase (bna4) from Aspergillus oryzae (strain ATCC 42149 / RIB 40) (Yellow koji mold).